A 136-amino-acid polypeptide reads, in one-letter code: Ribosome-binding factor A (136 aa).

The disordered stretch occupies residues 114-136 (DRANRPGPAADEPDEPDEPEDRR). Residues 124-136 (DEPDEPDEPEDRR) show a composition bias toward acidic residues.

The protein belongs to the RbfA family. In terms of assembly, monomer. Binds 30S ribosomal subunits, but not 50S ribosomal subunits or 70S ribosomes.

The protein localises to the cytoplasm. Functionally, one of several proteins that assist in the late maturation steps of the functional core of the 30S ribosomal subunit. Associates with free 30S ribosomal subunits (but not with 30S subunits that are part of 70S ribosomes or polysomes). Required for efficient processing of 16S rRNA. May interact with the 5'-terminal helix region of 16S rRNA. The chain is Ribosome-binding factor A from Bordetella petrii (strain ATCC BAA-461 / DSM 12804 / CCUG 43448).